Reading from the N-terminus, the 470-residue chain is MNTGHITQVMGPVVDVRFQSGQLPELNNALRVEQKGADQNAVDVNVTLEVALHLGDDTVRTIAMGSTDGLVRGTEVVDTGAAISVPVGEVTLGRVFNVLGESIDLDEPIPADAERSPIHREAPKFEELSTKTEILETGIKVVDLLAPYIKGGKIGLFGGAGVGKTVLIQELINNIAQEHGGISVFAGVGERTREGNDLYHEMSDSGVIKKTAMVFGQMNEPPGARMRVALSGLTMAEYFRDKQGQDVLLFIDNIFRFTQAGSEVSALLGRMPSAVGYQPTLATEMGQLQERITSTKVGSVTSIQAIYVPADDYTDPAPATTFAHLDATTNLERKLSEMGIYPAVDPLASTSRALSPEIVGEEHYNVARQVQQTLQKYKELQDIIAILGMDELSEEDKLIVARARRIQFFLSQNFHVAEQFTGQPGSYVPVKETIKGFKEILEGKYDDLPEDAFRLVGRIEEVVERAKQMV.

158–165 (GGAGVGKT) provides a ligand contact to ATP.

This sequence belongs to the ATPase alpha/beta chains family. F-type ATPases have 2 components, CF(1) - the catalytic core - and CF(0) - the membrane proton channel. CF(1) has five subunits: alpha(3), beta(3), gamma(1), delta(1), epsilon(1). CF(0) has three main subunits: a(1), b(2) and c(9-12). The alpha and beta chains form an alternating ring which encloses part of the gamma chain. CF(1) is attached to CF(0) by a central stalk formed by the gamma and epsilon chains, while a peripheral stalk is formed by the delta and b chains.

The protein localises to the cell membrane. The enzyme catalyses ATP + H2O + 4 H(+)(in) = ADP + phosphate + 5 H(+)(out). Produces ATP from ADP in the presence of a proton gradient across the membrane. The catalytic sites are hosted primarily by the beta subunits. The sequence is that of ATP synthase subunit beta from Halalkalibacterium halodurans (strain ATCC BAA-125 / DSM 18197 / FERM 7344 / JCM 9153 / C-125) (Bacillus halodurans).